A 273-amino-acid chain; its full sequence is 4-hydroxy-tetrahydrodipicolinate reductase (273 aa).

Residues 12 to 17 and E38 each bind NAD(+); that span reads GAGGRM. R39 provides a ligand contact to NADP(+). Residues 102 to 104 and 126 to 129 contribute to the NAD(+) site; these read GTT and AANF. H159 acts as the Proton donor/acceptor in catalysis. H160 lines the (S)-2,3,4,5-tetrahydrodipicolinate pocket. The active-site Proton donor is K163. Position 169-170 (169-170) interacts with (S)-2,3,4,5-tetrahydrodipicolinate; that stretch reads GT.

It belongs to the DapB family. Homotetramer.

It localises to the cytoplasm. It carries out the reaction (S)-2,3,4,5-tetrahydrodipicolinate + NAD(+) + H2O = (2S,4S)-4-hydroxy-2,3,4,5-tetrahydrodipicolinate + NADH + H(+). The catalysed reaction is (S)-2,3,4,5-tetrahydrodipicolinate + NADP(+) + H2O = (2S,4S)-4-hydroxy-2,3,4,5-tetrahydrodipicolinate + NADPH + H(+). The protein operates within amino-acid biosynthesis; L-lysine biosynthesis via DAP pathway; (S)-tetrahydrodipicolinate from L-aspartate: step 4/4. In terms of biological role, catalyzes the conversion of 4-hydroxy-tetrahydrodipicolinate (HTPA) to tetrahydrodipicolinate. The protein is 4-hydroxy-tetrahydrodipicolinate reductase of Shigella boydii serotype 4 (strain Sb227).